The chain runs to 382 residues: Proton extrusion protein PxcA (382 aa).

4 helical membrane passes run 162–182 (ILLL…TYIV), 257–277 (AIKN…VCLV), 305–325 (IILF…TVLL), and 340–360 (FILL…KYWI).

It belongs to the CemA family.

The protein resides in the cell inner membrane. Required for H(+) efflux immediately after light irradiation to form a rapid H(+) concentration gradient across the thylakoid membranes. Together with PxcL, contributes to transient H(+) uptake following dark to light transition. The chain is Proton extrusion protein PxcA from Parasynechococcus marenigrum (strain WH8102).